A 40-amino-acid polypeptide reads, in one-letter code: Beta-defensin 2 (40 aa).

3 disulfide bridges follow: cysteine 7–cysteine 36, cysteine 14–cysteine 29, and cysteine 19–cysteine 37.

This sequence belongs to the beta-defensin family. Neutrophilic granules.

The protein localises to the secreted. In terms of biological role, has bactericidal activity. Active against E.coli ML35 and S.aureus 502A. This is Beta-defensin 2 (DEFB2) from Bos taurus (Bovine).